Here is a 314-residue protein sequence, read N- to C-terminus: Zinc transporter ZIP3 (314 aa).

Over Met1–Lys3 the chain is Extracellular. A helical membrane pass occupies residues Leu4–Leu24. Topologically, residues Leu25–Lys42 are cytoplasmic. A helical membrane pass occupies residues Ile43–Leu63. Topologically, residues Leu64–Pro85 are extracellular. A helical transmembrane segment spans residues Leu86–Leu106. At Thr107–Arg169 the chain is on the cytoplasmic side. Phosphoserine occurs at positions 125 and 129. Residues Leu170–Leu190 traverse the membrane as a helical segment. Over Gln191–Lys196 the chain is Extracellular. Residues Val197–Ile217 traverse the membrane as a helical segment. The Cytoplasmic segment spans residues Ser218–Ala229. The chain crosses the membrane as a helical span at residues Ala230–Ile250. Residues Glu251–Ser262 are Extracellular-facing. Residues Val263–Ala283 traverse the membrane as a helical segment. Over Lys284–Arg292 the chain is Cytoplasmic. The chain crosses the membrane as a helical span at residues Leu293–Lys313. Position 314 (Trp314) is a topological domain, extracellular.

It belongs to the ZIP transporter (TC 2.A.5) family.

The protein resides in the cell membrane. Its subcellular location is the apical cell membrane. The catalysed reaction is Zn(2+)(in) = Zn(2+)(out). Functionally, transporter for the divalent cation Zn(2+). Mediates the influx of Zn(2+) into cells from extracellular space. Controls Zn(2+) accumulation into dentate gyrus granule cells in the hippocampus. Mediates Zn(2+) reuptake from the secreted milk within the alveolar lumen. The chain is Zinc transporter ZIP3 from Homo sapiens (Human).